A 611-amino-acid chain; its full sequence is O-fucosyltransferase 8 (611 aa).

Residues 1-29 (MGKQGSPRSPRPETIDKEEKFGRRSLDSL) form a disordered region. Over residues 10 to 26 (PRPETIDKEEKFGRRSL) the composition is skewed to basic and acidic residues. Residues 78-98 (IVLMISVTGFIFCMDSIMVSI) traverse the membrane as a helical; Signal-anchor for type II membrane protein segment. 3 N-linked (GlcNAc...) asparagine glycosylation sites follow: Asn-115, Asn-216, and Asn-270. 386–388 (HLR) contacts substrate. Residue Asn-506 is glycosylated (N-linked (GlcNAc...) asparagine).

This sequence belongs to the glycosyltransferase GT106 family.

It localises to the membrane. Its pathway is glycan metabolism. The chain is O-fucosyltransferase 8 from Arabidopsis thaliana (Mouse-ear cress).